We begin with the raw amino-acid sequence, 102 residues long: NADH-quinone oxidoreductase subunit K (102 aa).

3 helical membrane-spanning segments follow: residues 6-26, 30-50, and 62-82; these read MEHGLALSGVLFSLGLIGLMV, ILFVLMSLEVMMNAAALAFVV, and IMFILVITLAAAEASIGLAIL.

The protein belongs to the complex I subunit 4L family. As to quaternary structure, NDH-1 is composed of 13 different subunits. Subunits NuoA, H, J, K, L, M, N constitute the membrane sector of the complex.

It is found in the cell inner membrane. The enzyme catalyses a quinone + NADH + 5 H(+)(in) = a quinol + NAD(+) + 4 H(+)(out). NDH-1 shuttles electrons from NADH, via FMN and iron-sulfur (Fe-S) centers, to quinones in the respiratory chain. The immediate electron acceptor for the enzyme in this species is believed to be ubiquinone. Couples the redox reaction to proton translocation (for every two electrons transferred, four hydrogen ions are translocated across the cytoplasmic membrane), and thus conserves the redox energy in a proton gradient. The sequence is that of NADH-quinone oxidoreductase subunit K from Azotobacter vinelandii (strain DJ / ATCC BAA-1303).